The chain runs to 1170 residues: PAN2-PAN3 deadenylation complex catalytic subunit PAN2 (1170 aa).

WD repeat units lie at residues 104-144 (ENMK…IIKQ) and 280-319 (NISS…HFTD). Residues 319-458 (DMAIPIELPE…DPNEIESLKP (140 aa)) are linker. A disordered region spans residues 399-459 (RRNQVEDTRN…PNEIESLKPE (61 aa)). The segment covering 443-452 (VDQEPEDPNE) has biased composition (acidic residues). The USP domain maps to 459–846 (EAPPLYRNLE…MPAVLLFQIK (388 aa)). The 174-residue stretch at 894–1067 (VALDTEFVSL…EDARTALKLY (174 aa)) folds into the Exonuclease domain. A divalent metal cation contacts are provided by D897, E899, D1006, and D1059. The segment at 1094–1170 (NFKPPRREDR…PSKASSPLPK (77 aa)) is disordered. Positions 1098-1108 (PRREDREKELQ) are enriched in basic and acidic residues. The segment covering 1109–1119 (RQSTPPNSTAP) has biased composition (polar residues).

It belongs to the peptidase C19 family. PAN2 subfamily. Forms a heterotrimer with an asymmetric homodimer of the regulatory subunit PAN3 to form the poly(A)-nuclease (PAN) deadenylation complex. It depends on a divalent metal cation as a cofactor.

Its subcellular location is the cytoplasm. The catalysed reaction is Exonucleolytic cleavage of poly(A) to 5'-AMP.. With respect to regulation, positively regulated by the regulatory subunit PAN3. Functionally, catalytic subunit of the poly(A)-nuclease (PAN) deadenylation complex, one of two cytoplasmic mRNA deadenylases involved in mRNA turnover. PAN specifically shortens poly(A) tails of RNA and the activity is stimulated by poly(A)-binding protein PAB1. PAN deadenylation is followed by rapid degradation of the shortened mRNA tails by the CCR4-NOT complex. Deadenylated mRNAs are then degraded by two alternative mechanisms, namely exosome-mediated 3'-5' exonucleolytic degradation, or deadenylation-dependent mRNA decaping and subsequent 5'-3' exonucleolytic degradation by XRN1. May also be involved in post-transcriptional maturation of mRNA poly(A) tails. This is PAN2-PAN3 deadenylation complex catalytic subunit PAN2 from Chaetomium thermophilum (strain DSM 1495 / CBS 144.50 / IMI 039719) (Thermochaetoides thermophila).